The sequence spans 434 residues: Putative magnesium transporter MRS2-D (434 aa).

Disordered stretches follow at residues 1-21 (MAAR…AAGE), 126-171 (AASP…DGEA), and 279-311 (EASE…AGGG). Over residues 9–21 (AAGAGAPAPAAGE) the composition is skewed to low complexity. A compositionally biased stretch (basic and acidic residues) spans 279-291 (EASELEDHSSRDE). Helical transmembrane passes span 367 to 387 (GILL…TGVF) and 405 to 425 (FPCA…AALL).

The protein belongs to the CorA metal ion transporter (MIT) (TC 1.A.35.5) family.

The protein resides in the membrane. In terms of biological role, putative magnesium transporter. The chain is Putative magnesium transporter MRS2-D (MRS2-D) from Oryza sativa subsp. indica (Rice).